Here is a 326-residue protein sequence, read N- to C-terminus: GTP 3',8-cyclase (326 aa).

Positions 7-232 (GFGRSFPYLR…PRAADAGPAR (226 aa)) constitute a Radical SAM core domain. Arg16 is a GTP binding site. Positions 23 and 27 each coordinate [4Fe-4S] cluster. Tyr29 serves as a coordination point for S-adenosyl-L-methionine. Cys30 is a [4Fe-4S] cluster binding site. Arg65 is a GTP binding site. Residue Gly69 coordinates S-adenosyl-L-methionine. Residue Thr96 participates in GTP binding. Ser120 contacts S-adenosyl-L-methionine. Lys157 contributes to the GTP binding site. An S-adenosyl-L-methionine-binding site is contributed by Met191. Residues Cys254 and Cys257 each contribute to the [4Fe-4S] cluster site. Residue 259-261 (RLR) participates in GTP binding. Residue Cys271 coordinates [4Fe-4S] cluster.

This sequence belongs to the radical SAM superfamily. MoaA family. Monomer and homodimer. The cofactor is [4Fe-4S] cluster.

The catalysed reaction is GTP + AH2 + S-adenosyl-L-methionine = (8S)-3',8-cyclo-7,8-dihydroguanosine 5'-triphosphate + 5'-deoxyadenosine + L-methionine + A + H(+). It participates in cofactor biosynthesis; molybdopterin biosynthesis. Functionally, catalyzes the cyclization of GTP to (8S)-3',8-cyclo-7,8-dihydroguanosine 5'-triphosphate. This is GTP 3',8-cyclase from Stenotrophomonas maltophilia (strain K279a).